The sequence spans 419 residues: UDP-N-acetylglucosamine 1-carboxyvinyltransferase (419 aa).

22–23 (KN) contributes to the phosphoenolpyruvate binding site. UDP-N-acetyl-alpha-D-glucosamine is bound at residue arginine 92. The active-site Proton donor is cysteine 116. Residue cysteine 116 is modified to 2-(S-cysteinyl)pyruvic acid O-phosphothioketal. Residues 121-125 (RPIDL), aspartate 307, and leucine 329 contribute to the UDP-N-acetyl-alpha-D-glucosamine site.

Belongs to the EPSP synthase family. MurA subfamily.

It is found in the cytoplasm. The enzyme catalyses phosphoenolpyruvate + UDP-N-acetyl-alpha-D-glucosamine = UDP-N-acetyl-3-O-(1-carboxyvinyl)-alpha-D-glucosamine + phosphate. It participates in cell wall biogenesis; peptidoglycan biosynthesis. In terms of biological role, cell wall formation. Adds enolpyruvyl to UDP-N-acetylglucosamine. The protein is UDP-N-acetylglucosamine 1-carboxyvinyltransferase of Campylobacter fetus subsp. fetus (strain 82-40).